A 184-amino-acid chain; its full sequence is Photosystem I assembly protein Ycf3 (184 aa).

TPR repeat units follow at residues 31–64 (AFAY…DEDQ), 68–101 (SYTL…NSNL), and 131–164 (MEIS…APDN).

Belongs to the Ycf3 family.

Its subcellular location is the plastid. The protein resides in the chloroplast thylakoid membrane. Functionally, essential for the assembly of the photosystem I (PSI) complex. May act as a chaperone-like factor to guide the assembly of the PSI subunits. The chain is Photosystem I assembly protein Ycf3 from Thalassiosira pseudonana (Marine diatom).